The primary structure comprises 285 residues: Probable ribosomal RNA small subunit methyltransferase A (285 aa).

S-adenosyl-L-methionine-binding residues include His-29, Leu-31, Gly-58, Glu-79, Asp-107, and Asn-122.

Belongs to the class I-like SAM-binding methyltransferase superfamily. rRNA adenine N(6)-methyltransferase family. RsmA subfamily.

It is found in the cytoplasm. Specifically dimethylates two adjacent adenosines in the loop of a conserved hairpin near the 3'-end of 16S rRNA in the 30S particle. May play a critical role in biogenesis of 30S subunits. The protein is Probable ribosomal RNA small subunit methyltransferase A of Haloarcula marismortui (strain ATCC 43049 / DSM 3752 / JCM 8966 / VKM B-1809) (Halobacterium marismortui).